Consider the following 373-residue polypeptide: Probable peptidoglycan glycosyltransferase FtsW (373 aa).

The next 9 helical transmembrane spans lie at 15–35 (LVILLMAVALTCFGVVMVYSA), 48–68 (FYFLKRQGVYALLGFGVMAVA), 80–100 (AVPILLGCLFLLFLVFIPGIG), 144–164 (FFSTGFLPYMVLLSVVLLILL), 168–188 (DLGAALTMGLVAIIMLFAAGT), 192–212 (YIIAMGMMALPILYFLVMNVD), 278–298 (LGLIGVTVIAAMFLMLVLRGV), 311–331 (FLAFGIATLLGIQSFVNMAVV), and 342–362 (LPFISYGGSSLIVTLFAVGIL).

The protein belongs to the SEDS family. FtsW subfamily.

Its subcellular location is the cell inner membrane. It catalyses the reaction [GlcNAc-(1-&gt;4)-Mur2Ac(oyl-L-Ala-gamma-D-Glu-L-Lys-D-Ala-D-Ala)](n)-di-trans,octa-cis-undecaprenyl diphosphate + beta-D-GlcNAc-(1-&gt;4)-Mur2Ac(oyl-L-Ala-gamma-D-Glu-L-Lys-D-Ala-D-Ala)-di-trans,octa-cis-undecaprenyl diphosphate = [GlcNAc-(1-&gt;4)-Mur2Ac(oyl-L-Ala-gamma-D-Glu-L-Lys-D-Ala-D-Ala)](n+1)-di-trans,octa-cis-undecaprenyl diphosphate + di-trans,octa-cis-undecaprenyl diphosphate + H(+). Its pathway is cell wall biogenesis; peptidoglycan biosynthesis. Functionally, peptidoglycan polymerase that is essential for cell division. The chain is Probable peptidoglycan glycosyltransferase FtsW from Geobacter sulfurreducens (strain DL-1 / KN400).